The sequence spans 146 residues: Deoxyuridine 5'-triphosphate nucleotidohydrolase (146 aa).

Residues 65–67 (RSG), Asn-78, and 82–84 (TID) each bind substrate.

Belongs to the dUTPase family. It depends on Mg(2+) as a cofactor.

It carries out the reaction dUTP + H2O = dUMP + diphosphate + H(+). It functions in the pathway pyrimidine metabolism; dUMP biosynthesis; dUMP from dCTP (dUTP route): step 2/2. In terms of biological role, this enzyme is involved in nucleotide metabolism: it produces dUMP, the immediate precursor of thymidine nucleotides and it decreases the intracellular concentration of dUTP so that uracil cannot be incorporated into DNA. The protein is Deoxyuridine 5'-triphosphate nucleotidohydrolase of Treponema pallidum subsp. pallidum (strain SS14).